Here is a 568-residue protein sequence, read N- to C-terminus: Urease subunit alpha (568 aa).

The Urease domain occupies 131–568 (GGMDAHIHFI…LPLAQRYFLY (438 aa)). Residues His136, His138, and Lys219 each coordinate Ni(2+). Lys219 carries the N6-carboxylysine modification. A substrate-binding site is contributed by His221. Ni(2+) contacts are provided by His248 and His274. His322 serves as the catalytic Proton donor. Asp362 is a Ni(2+) binding site.

This sequence belongs to the metallo-dependent hydrolases superfamily. Urease alpha subunit family. In terms of assembly, heterotrimer of UreA (gamma), UreB (beta) and UreC (alpha) subunits. Three heterotrimers associate to form the active enzyme. Requires Ni cation as cofactor. Post-translationally, carboxylation allows a single lysine to coordinate two nickel ions.

The protein resides in the cytoplasm. It carries out the reaction urea + 2 H2O + H(+) = hydrogencarbonate + 2 NH4(+). Its pathway is nitrogen metabolism; urea degradation; CO(2) and NH(3) from urea (urease route): step 1/1. This Cereibacter sphaeroides (strain KD131 / KCTC 12085) (Rhodobacter sphaeroides) protein is Urease subunit alpha.